Consider the following 196-residue polypeptide: Transmembrane protein 126A (196 aa).

The Mitochondrial matrix segment spans residues 1–34 (MESHKPSTNKDDLIFNIIPRKIKQLPESDRNLLE). The helical transmembrane segment at 35–55 (YGSAYIGLNAAFGGLIANSLF) threads the bilayer. The Mitochondrial intermembrane segment spans residues 56–57 (RR). Residues 58–78 (ILNVTQARVASSLPMAVIPFL) traverse the membrane as a helical segment. Topologically, residues 79–106 (TANLSYHSFVSLPLSTGNLNCEICTTTR) are mitochondrial matrix. A helical membrane pass occupies residues 107 to 127 (GTLVGFVLGGLYPILLAIPVN). The Mitochondrial intermembrane segment spans residues 128–159 (GGLAARYESSPLPQRGNIFNYWITISKPVFRK). Residues 160 to 176 (MLFPTLLQTAFAAYLGS) form a helical membrane-spanning segment. The Mitochondrial matrix segment spans residues 177-196 (RQYKLLIKALQLPEPDLEIQ).

This sequence belongs to the TMEM126 family. In terms of assembly, interacts with OXA1L; promoting cotranslational quality control in mitochondria.

Its subcellular location is the mitochondrion inner membrane. Functionally, protein required for the cotranslational protein quality control in the inner membrane of the mitochondria. Associates with newly synthesized polypeptides and may act as a chaperone that cooperates with OXA1L for the insertion of newly synthesized mitochondrial proteins into the inner membrane. Required for the assembly of the ND4 module of mitochondrial complex I. The sequence is that of Transmembrane protein 126A (Tmem126a) from Rattus norvegicus (Rat).